Here is a 602-residue protein sequence, read N- to C-terminus: Basic-leucine zipper transcription factor B (602 aa).

The segment covering M1–G10 has biased composition (polar residues). A disordered region spans residues M1 to R128. Composition is skewed to low complexity over residues G11–S54 and Q66–D102. Positions K58–D94 form a coiled coil. Residues E113 to A176 enclose the bZIP domain. The interval K115 to K135 is basic motif. A leucine-zipper region spans residues I138–L145. Disordered stretches follow at residues T328–N401 and Q525–Q602. 3 stretches are compositionally biased toward low complexity: residues P336 to T350, L358 to N401, and Q525 to Y592. Residues T509–F552 are a coiled coil. A compositionally biased stretch (polar residues) spans N593 to Q602.

It belongs to the bZIP family. As to quaternary structure, binds DNA as a dimer. Heterodimerizes with dimA; in vitro. Also able to form homodimer; in vitro.

The protein localises to the nucleus. Transcriptional regulator involved in DIF-1 signaling. DIF-1 (Differentiation Inducing Factor-1) is a signal molecule involved in the differentiation of pstO (prestalk-O) cells. May be a direct activator of ecmA. This chain is Basic-leucine zipper transcription factor B (dimB), found in Dictyostelium discoideum (Social amoeba).